We begin with the raw amino-acid sequence, 656 residues long: tRNA 5-methylaminomethyl-2-thiouridine biosynthesis bifunctional protein MnmC (656 aa).

Residues 1–236 (MTDPLIPAVL…KRAMLVGHFA (236 aa)) form a tRNA (mnm(5)s(2)U34)-methyltransferase region. Residues 260-656 (IGAGLAGCAV…LRALRQGAVS (397 aa)) are FAD-dependent cmnm(5)s(2)U34 oxidoreductase.

In the N-terminal section; belongs to the methyltransferase superfamily. tRNA (mnm(5)s(2)U34)-methyltransferase family. It in the C-terminal section; belongs to the DAO family. Requires FAD as cofactor.

The protein localises to the cytoplasm. The enzyme catalyses 5-aminomethyl-2-thiouridine(34) in tRNA + S-adenosyl-L-methionine = 5-methylaminomethyl-2-thiouridine(34) in tRNA + S-adenosyl-L-homocysteine + H(+). Catalyzes the last two steps in the biosynthesis of 5-methylaminomethyl-2-thiouridine (mnm(5)s(2)U) at the wobble position (U34) in tRNA. Catalyzes the FAD-dependent demodification of cmnm(5)s(2)U34 to nm(5)s(2)U34, followed by the transfer of a methyl group from S-adenosyl-L-methionine to nm(5)s(2)U34, to form mnm(5)s(2)U34. This chain is tRNA 5-methylaminomethyl-2-thiouridine biosynthesis bifunctional protein MnmC, found in Paraburkholderia phytofirmans (strain DSM 17436 / LMG 22146 / PsJN) (Burkholderia phytofirmans).